A 149-amino-acid chain; its full sequence is Transcriptional repressor NrdR (149 aa).

A zinc finger lies at 3–34; it reads CPFCAAEETKVVDSRLAADGYQIRRRRECTSC. The ATP-cone domain maps to 49 to 139; it reads PYVIKNNGNR…VYLSFDDIEE (91 aa).

It belongs to the NrdR family. Zn(2+) serves as cofactor.

In terms of biological role, negatively regulates transcription of bacterial ribonucleotide reductase nrd genes and operons by binding to NrdR-boxes. The protein is Transcriptional repressor NrdR of Actinobacillus pleuropneumoniae serotype 3 (strain JL03).